The following is a 380-amino-acid chain: Alanine racemase (380 aa).

The active-site Proton acceptor; specific for D-alanine is the Lys39. Lys39 carries the N6-(pyridoxal phosphate)lysine modification. Position 137 (Arg137) interacts with substrate. Residue Tyr263 is the Proton acceptor; specific for L-alanine of the active site. Met310 lines the substrate pocket.

It belongs to the alanine racemase family. The cofactor is pyridoxal 5'-phosphate.

The catalysed reaction is L-alanine = D-alanine. It functions in the pathway amino-acid biosynthesis; D-alanine biosynthesis; D-alanine from L-alanine: step 1/1. Its function is as follows. Catalyzes the interconversion of L-alanine and D-alanine. May also act on other amino acids. This Macrococcus caseolyticus (strain JCSC5402) (Macrococcoides caseolyticum) protein is Alanine racemase (alr).